Reading from the N-terminus, the 85-residue chain is Large ribosomal subunit protein bL27 (85 aa).

This sequence belongs to the bacterial ribosomal protein bL27 family.

The polypeptide is Large ribosomal subunit protein bL27 (Cellvibrio japonicus (strain Ueda107) (Pseudomonas fluorescens subsp. cellulosa)).